The chain runs to 258 residues: Imidazole glycerol phosphate synthase subunit HisF (258 aa).

Catalysis depends on residues Asp-12 and Asp-131.

This sequence belongs to the HisA/HisF family. Heterodimer of HisH and HisF.

It is found in the cytoplasm. The enzyme catalyses 5-[(5-phospho-1-deoxy-D-ribulos-1-ylimino)methylamino]-1-(5-phospho-beta-D-ribosyl)imidazole-4-carboxamide + L-glutamine = D-erythro-1-(imidazol-4-yl)glycerol 3-phosphate + 5-amino-1-(5-phospho-beta-D-ribosyl)imidazole-4-carboxamide + L-glutamate + H(+). The protein operates within amino-acid biosynthesis; L-histidine biosynthesis; L-histidine from 5-phospho-alpha-D-ribose 1-diphosphate: step 5/9. Functionally, IGPS catalyzes the conversion of PRFAR and glutamine to IGP, AICAR and glutamate. The HisF subunit catalyzes the cyclization activity that produces IGP and AICAR from PRFAR using the ammonia provided by the HisH subunit. The polypeptide is Imidazole glycerol phosphate synthase subunit HisF (Pseudarthrobacter chlorophenolicus (strain ATCC 700700 / DSM 12829 / CIP 107037 / JCM 12360 / KCTC 9906 / NCIMB 13794 / A6) (Arthrobacter chlorophenolicus)).